The primary structure comprises 1233 residues: MANDSPAKSLVDIDLSSLRDPAGIFELVEVVGNGTYGQVYKGRHVKTVTAAIKVMDVTEDEEEEITLEINMLKKYSHHRNIATYYGAFIKKSPPGHDDQLWLVMEFCGAGSITDLVKNTKGNTLKEDWIAYISREILRGLAHLHIHHVIHRDIKGQNVLLTENAEVKLVDFGVSAQLDRTVGRRNTFIGTPYWMAPEVIACDENPDATYDYRSDLWSCGITAIEMAEGGPPLCDMHPMRALFLIPRNPPPRLKSKKWSKKFFSFIEGCLVKNYMQRPSTEQLLKHPFIRDQPNERQVRIQLKDHIDRTRKKRGEKDETEYEYSGSEEEEEEVPEQEGEPSSIVNVPGESTLRRDFLRLQQENKERSEALRRQQLLQEQQLREQEEYKRQLLAERQKRIEQQKEQRRRLEEQQRREREARRQQEREQRRREQEEKRRLEELERRRKEEEERRRAEEEKRRVEREQEYIRRQLEEEQRHLEILQQQLLQEQAMLLHDHRRPHAQQQPPPPQQQDRSKPSFHAPEPKPHYDPADRAREVQWSHLASLKNNVSPVSRSHSFSDPSPKFAHHHLRSQDPCPPSRSEGLSQSSDSKSEVPEPTQKAWSRSDSDEVPPRVPVRTTSRSPVLSRRDSPLQGGGQQNSQAGQRNSTSSIEPRLLWERVEKLVPRPGSGSSSGSSNSGSQPGSHPGSQSGSGERFRVRSSSKSEGSPSPRQESAAKKPDDKKEVFRSLKPAGEVDLTALAKELRAVEDVRPPHKVTDYSSSSEESGTTDEEEEDVEQEGADDSTSGPEDTRAASSPNLSNGETESVKTMIVHDDVESEPAMTPSKEGTLIVRQTQSASSTLQKHKSSSSFTPFIDPRLLQISPSSGTTVTSVVGFSCDGLRPEAIRQDPTRKGSVVNVNPTNTRPQSDTPEIRKYKKRFNSEILCAALWGVNLLVGTESGLMLLDRSGQGKVYPLISRRRFQQMDVLEGLNVLVTISGKKDKLRVYYLSWLRNKILHNDPEVEKKQGWTTVGDLEGCVHYKVVKYERIKFLVIALKSSVEVYAWAPKPYHKFMAFKSFGELLHKPLLVDLTVEEGQRLKVIYGSCAGFHAVDVDSGSVYDIYLPTHIQCSIKPHAIIILPNTDGMELLVCYEDEGVYVNTYGRITKDVVLQWGEMPTSVAYIRSNQTMGWGEKAIEIRSVETGHLDGVFMHKRAQRLKFLCGRNDKVFFSSVRSGGSSQVYFMTLGRTSLLSW.

Ala2 is subject to N-acetylalanine. Ser5 carries the phosphoserine modification. One can recognise a Protein kinase domain in the interval 25–289; it reads FELVEVVGNG…EQLLKHPFIR (265 aa). ATP-binding positions include 31 to 39 and Lys53; that span reads VGNGTYGQV. The active-site Proton acceptor is the Asp152. 3 disordered regions span residues 305–348, 401–463, and 489–805; these read IDRT…VPGE, QKEQ…VERE, and QAML…ETES. The segment covering 316 to 337 has biased composition (acidic residues); it reads DETEYEYSGSEEEEEEVPEQEG. Ser323 and Ser325 each carry phosphoserine. Positions 521-537 are enriched in basic and acidic residues; it reads PEPKPHYDPADRAREVQ. A Phosphoserine modification is found at Ser543. Residues 544–559 are compositionally biased toward polar residues; it reads LKNNVSPVSRSHSFSD. Residues Ser619, Ser621, Ser629, and Ser646 each carry the phosphoserine modification. Over residues 654–663 the composition is skewed to basic and acidic residues; that stretch reads LLWERVEKLV. Residues 666–692 show a composition bias toward low complexity; sequence PGSGSSSGSSNSGSQPGSHPGSQSGSG. Phosphoserine is present on residues Ser691, Ser703, and Ser706. 2 stretches are compositionally biased toward basic and acidic residues: residues 713–726 and 741–756; these read SAAK…EVFR and KELR…HKVT. Over residues 766–781 the composition is skewed to acidic residues; the sequence is GTTDEEEEDVEQEGAD. A compositionally biased stretch (polar residues) spans 783 to 803; sequence STSGPEDTRAASSPNLSNGET. Phosphoserine occurs at positions 785, 794, 795, 799, and 817. Thr822 bears the Phosphothreonine mark. Ser846, Ser849, Ser894, and Ser907 each carry phosphoserine. The tract at residues 852–1206 is mediates interaction with RAP2A; that stretch reads PFIDPRLLQI…LKFLCGRNDK (355 aa). Residues 920–1207 enclose the CNH domain; that stretch reads NSEILCAALW…KFLCGRNDKV (288 aa).

The protein belongs to the protein kinase superfamily. STE Ser/Thr protein kinase family. STE20 subfamily. As to quaternary structure, interacts with the SH3 domain of the adapter proteins Nck. Interacts (via its CNH regulatory domain) with ATL1 (via the N-terminal region). Interacts with RAP2A (GTP-bound form preferentially). Requires Mg(2+) as cofactor. In terms of tissue distribution, appears to be ubiquitous, expressed in all tissue types examined. Highest levels observed in heart and brain.

The protein resides in the cytoplasm. The enzyme catalyses L-seryl-[protein] + ATP = O-phospho-L-seryl-[protein] + ADP + H(+). It carries out the reaction L-threonyl-[protein] + ATP = O-phospho-L-threonyl-[protein] + ADP + H(+). Functionally, serine/threonine kinase that plays a role in the response to environmental stress and cytokines such as TNF-alpha. Appears to act upstream of the JUN N-terminal pathway. Activator of the Hippo signaling pathway which plays a pivotal role in organ size control and tumor suppression by restricting proliferation and promoting apoptosis. MAP4Ks act in parallel to and are partially redundant with STK3/MST2 and STK4/MST2 in the phosphorylation and activation of LATS1/2, and establish MAP4Ks as components of the expanded Hippo pathway. Phosphorylates SMAD1 on Thr-322. The sequence is that of Mitogen-activated protein kinase kinase kinase kinase 4 (Map4k4) from Mus musculus (Mouse).